Consider the following 268-residue polypeptide: Hydroxyethylthiazole kinase 2 (268 aa).

Met-42 lines the substrate pocket. ATP is bound by residues Lys-117 and Thr-167. Residue Gly-194 coordinates substrate.

The protein belongs to the Thz kinase family. Mg(2+) serves as cofactor.

The catalysed reaction is 5-(2-hydroxyethyl)-4-methylthiazole + ATP = 4-methyl-5-(2-phosphooxyethyl)-thiazole + ADP + H(+). It functions in the pathway cofactor biosynthesis; thiamine diphosphate biosynthesis; 4-methyl-5-(2-phosphoethyl)-thiazole from 5-(2-hydroxyethyl)-4-methylthiazole: step 1/1. In terms of biological role, catalyzes the phosphorylation of the hydroxyl group of 4-methyl-5-beta-hydroxyethylthiazole (THZ). The polypeptide is Hydroxyethylthiazole kinase 2 (Streptococcus pneumoniae (strain CGSP14)).